Consider the following 82-residue polypeptide: Defensin-like protein 156 (82 aa).

Positions 1–27 are cleaved as a signal peptide; the sequence is MAKISCSYFLVLMLVFSVFSLVEKTKG. Cystine bridges form between Cys31-Cys77, Cys41-Cys60, Cys46-Cys71, and Cys50-Cys73.

It belongs to the DEFL family. Expressed in flower buds, but not in stems, roots or rosette leaves.

It is found in the secreted. The chain is Defensin-like protein 156 (LCR21) from Arabidopsis thaliana (Mouse-ear cress).